Reading from the N-terminus, the 777-residue chain is Rho-GTPase-activating protein 8 (777 aa).

The region spanning 3–420 (SSFSNGFWSK…YQEIIQPESD (418 aa)) is the F-BAR domain. Residues 117 to 172 (QKLQTSQQVLTNQIKSYEKKYYTLKKTKSAYYNKCRNLEDYEEESKESNETTSEAI) are a coiled coil. Positions 213–296 (VLQEIPLQDY…WKDKAFQFAG (84 aa)) constitute a DEP domain. Positions 454–650 (VDVEFLSHRD…DLLTYGPSIF (197 aa)) constitute a Rho-GAP domain. Residues 667-709 (LYQSSATPRSTDVSPTRPDSISSVRSHTAVESPRSSFEELQPS) are disordered. The segment covering 668–692 (YQSSATPRSTDVSPTRPDSISSVRS) has biased composition (polar residues). Residues Ser676 and Ser680 each carry the phosphoserine modification. At Thr682 the chain carries Phosphothreonine. The residue at position 686 (Ser686) is a Phosphoserine. Thr694 is modified (phosphothreonine). Phosphoserine is present on Ser698.

As to quaternary structure, interacts with pak1/shk1. In terms of processing, phosphorylated by pak1/shk1.

It localises to the cytoplasm. Acts in signal transduction. Negatively regulates the pak1/shk1 control pathway. This is Rho-GTPase-activating protein 8 (rga8) from Schizosaccharomyces pombe (strain 972 / ATCC 24843) (Fission yeast).